Consider the following 159-residue polypeptide: Probable chemoreceptor glutamine deamidase CheD 1 (159 aa).

Belongs to the CheD family.

It carries out the reaction L-glutaminyl-[protein] + H2O = L-glutamyl-[protein] + NH4(+). Probably deamidates glutamine residues to glutamate on methyl-accepting chemotaxis receptors (MCPs), playing an important role in chemotaxis. The polypeptide is Probable chemoreceptor glutamine deamidase CheD 1 (Methanosarcina acetivorans (strain ATCC 35395 / DSM 2834 / JCM 12185 / C2A)).